The primary structure comprises 61 residues: Large ribosomal subunit protein bL28 (61 aa).

The protein belongs to the bacterial ribosomal protein bL28 family.

This Geobacillus sp. (strain WCH70) protein is Large ribosomal subunit protein bL28.